The sequence spans 697 residues: MLKRAHYVALHVTLNHNGLSYQRVFSCLTQFPMLRHSSTAAKNNVSMISKFQAPEDKFFPSFSLKSMPKQSSHMSASLLNSLNTSMKKSFSRKKYREAVSLFRKNLWKYEESWIRNQDFIDCCIIACSAYEKLCQPLRIKKTFIILSQLCPKLPAELCRVFLSYATGCVNYGHNVALTCFENSPKELIDYNYWLSWLSFSKSSPVVLWLTFTRISSAGLSPNAETFEILLVAFASQKNFWFFEKTYDLFMQSKLTWRPFTYRVLIESFMKFGNFEEAEKLAYSYVKNKIDSLSSDVFFSAILKFYAVGGDFQGFKKLLSFMTDYNVNFSVSTLNQLLRLNLYHAMDEKISTFSSEHITKLIEQQIKPDLESMLIISEYLNEYKPSPKMRELINWLYSNFHLPKTVSLHFLREVQSLVFRYPLLHSKIHLAISTLKDSGCDWNVGLSYLNWLFVNKRITEAINFFYTITINAGTRPPNELFDVFISNLLKFTSAETTSSAIRKVQSKYPSMCGSSPAIKLILFSKSFSVLQSTSEKIEQLLVSFQRNPSAYSKSFTLALAEWLFSRRLFQSALLYSFKVSDVDDSHFSFRSQILICWCYYRLNDFKSLIQHTNNLLQSNNASLLRRLAATLYRIQIRENNGYKRVLLDRLRKKAILRAFPSRTLNRTEKVKLYNEDAKFRSIFSRVLLHQSHLGNVIS.

The transit peptide at 1–36 (MLKRAHYVALHVTLNHNGLSYQRVFSCLTQFPMLRH) directs the protein to the mitochondrion. PPR repeat units follow at residues 257 to 288 (RPFT…VKNK) and 294 to 328 (SDVF…NVNF).

Its subcellular location is the mitochondrion. Functionally, mitochondrial RNA-binding protein required for the stability of the cox2 and cox3 mRNAs. The chain is Pentatricopeptide repeat-containing protein 1, mitochondrial (ppr1) from Schizosaccharomyces pombe (strain 972 / ATCC 24843) (Fission yeast).